The primary structure comprises 367 residues: Anhydro-N-acetylmuramic acid kinase (367 aa).

An ATP-binding site is contributed by 13 to 20; sequence GTSMDGAD.

It belongs to the anhydro-N-acetylmuramic acid kinase family.

The enzyme catalyses 1,6-anhydro-N-acetyl-beta-muramate + ATP + H2O = N-acetyl-D-muramate 6-phosphate + ADP + H(+). Its pathway is amino-sugar metabolism; 1,6-anhydro-N-acetylmuramate degradation. It participates in cell wall biogenesis; peptidoglycan recycling. Catalyzes the specific phosphorylation of 1,6-anhydro-N-acetylmuramic acid (anhMurNAc) with the simultaneous cleavage of the 1,6-anhydro ring, generating MurNAc-6-P. Is required for the utilization of anhMurNAc either imported from the medium or derived from its own cell wall murein, and thus plays a role in cell wall recycling. This chain is Anhydro-N-acetylmuramic acid kinase, found in Neisseria meningitidis serogroup A / serotype 4A (strain DSM 15465 / Z2491).